Here is a 253-residue protein sequence, read N- to C-terminus: Triosephosphate isomerase, cytosolic (253 aa).

Asn10 and Lys12 together coordinate substrate. The active-site Electrophile is His96. Residue Glu166 is the Proton acceptor of the active site.

It belongs to the triosephosphate isomerase family. As to quaternary structure, homodimer.

The protein resides in the cytoplasm. The enzyme catalyses D-glyceraldehyde 3-phosphate = dihydroxyacetone phosphate. The protein operates within carbohydrate biosynthesis; gluconeogenesis. Its pathway is carbohydrate degradation; glycolysis; D-glyceraldehyde 3-phosphate from glycerone phosphate: step 1/1. This Zea mays (Maize) protein is Triosephosphate isomerase, cytosolic.